The sequence spans 417 residues: Phosphoglycerate kinase 2 (417 aa).

The residue at position 4 (Ser-4) is a Phosphoserine. Lys-11 is modified (N6-acetyllysine). Positions 23, 24, 25, 26, 38, and 39 each coordinate (2R)-3-phosphoglycerate. Lys-48 carries the N6-acetyllysine modification. (2R)-3-phosphoglycerate-binding residues include Ser-62, His-63, Gly-65, and Arg-66. Lys-75, Lys-86, and Lys-97 each carry N6-acetyllysine. (2R)-3-phosphoglycerate-binding residues include Leu-122 and Arg-123. N6-acetyllysine is present on residues Lys-131 and Lys-146. Positions 170 and 171 each coordinate (2R)-3-phosphoglycerate. A Phosphotyrosine modification is found at Tyr-196. Lys-199 is subject to N6-acetyllysine. An ADP-binding site is contributed by Gly-214. CDP is bound at residue Gly-214. Positions 215 and 216 each coordinate AMP. Ala-215 is a binding site for ATP. Ala-215 contacts Mg(2+). Asp-219 is a binding site for CDP. A Mg(2+)-binding site is contributed by Asp-219. Lys-220 contacts AMP. Position 220 (Lys-220) interacts with ATP. Residue Gly-238 coordinates ADP. Gly-238 contributes to the CDP binding site. Gly-239 lines the AMP pocket. Gly-239 lines the ATP pocket. N6-acetyllysine is present on residues Lys-267 and Lys-291. Gly-313 serves as a coordination point for AMP. Gly-313 serves as a coordination point for ATP. Gly-338, Ile-340, and Phe-343 together coordinate CDP. Phe-343 is a binding site for ADP. Glu-344 is a binding site for AMP. The ATP site is built by Glu-344, Asp-375, and Thr-376. Asp-375 is a binding site for Mg(2+).

The protein belongs to the phosphoglycerate kinase family. In terms of assembly, monomer. Mg(2+) serves as cofactor. In terms of tissue distribution, testis and sperm. Localized on the principle piece in the sperm (at protein level). Testis-specific.

It is found in the cytoplasm. The enzyme catalyses (2R)-3-phosphoglycerate + ATP = (2R)-3-phospho-glyceroyl phosphate + ADP. The protein operates within carbohydrate degradation; glycolysis; pyruvate from D-glyceraldehyde 3-phosphate: step 2/5. Functionally, essential for sperm motility and male fertility but is not required for the completion of spermatogenesis. The polypeptide is Phosphoglycerate kinase 2 (Pgk2) (Mus musculus (Mouse)).